The primary structure comprises 248 residues: Mannose-binding protein C (248 aa).

Residues 1 to 20 (MSLFPSLTLLLLSVVATSYS) form the signal peptide. A Collagen-like domain is found at 42-99 (GINGFPGKDGRDGTKGEKGEPGQGLRGLQGPPGKLGPPGNPGSSGSPGPKGQKGDPGE). The disordered stretch occupies residues 43-113 (INGFPGKDGR…DSSLAASERK (71 aa)). Proline 47 carries the 4-hydroxyproline modification. The segment covering 49 to 61 (KDGRDGTKGEKGE) has biased composition (basic and acidic residues). 4-hydroxyproline is present on residues proline 73, proline 79, proline 82, and proline 88. A compositionally biased stretch (low complexity) spans 82–91 (PGSSGSPGPK). Residues 112–130 (RKALQTEMARIKKWLTFSL) are a coiled coil. The region spanning 134–245 (VGNKFFLTNG…CSSSHLALCE (112 aa)) is the C-type lectin domain. Cystine bridges form between cysteine 155–cysteine 244 and cysteine 222–cysteine 236.

In terms of assembly, oligomeric complex of 3 or more homotrimers. Interacts with MASP1 and MASP2. Interacts with MEP1A and MEP1B and may inhibit their catalytic activity. In terms of processing, hydroxylation on proline residues within the sequence motif, GXPG, is most likely to be 4-hydroxy as this fits the requirement for 4-hydroxylation in vertebrates.

The protein localises to the secreted. Its function is as follows. Calcium-dependent lectin involved in innate immune defense. Binds mannose, fucose and N-acetylglucosamine on different microorganisms and activates the lectin complement pathway. Binds to late apoptotic cells, as well as to apoptotic blebs and to necrotic cells, but not to early apoptotic cells, facilitating their uptake by macrophages. This is Mannose-binding protein C (MBL2) from Chlorocebus aethiops (Green monkey).